A 365-amino-acid polypeptide reads, in one-letter code: UDP-N-acetylglucosamine--N-acetylmuramyl-(pentapeptide) pyrophosphoryl-undecaprenol N-acetylglucosamine transferase (365 aa).

Residues 10 to 12 (TAG), N124, R161, S195, I248, and Q292 contribute to the UDP-N-acetyl-alpha-D-glucosamine site.

It belongs to the glycosyltransferase 28 family. MurG subfamily.

It is found in the cell membrane. The enzyme catalyses di-trans,octa-cis-undecaprenyl diphospho-N-acetyl-alpha-D-muramoyl-L-alanyl-D-glutamyl-meso-2,6-diaminopimeloyl-D-alanyl-D-alanine + UDP-N-acetyl-alpha-D-glucosamine = di-trans,octa-cis-undecaprenyl diphospho-[N-acetyl-alpha-D-glucosaminyl-(1-&gt;4)]-N-acetyl-alpha-D-muramoyl-L-alanyl-D-glutamyl-meso-2,6-diaminopimeloyl-D-alanyl-D-alanine + UDP + H(+). Its pathway is cell wall biogenesis; peptidoglycan biosynthesis. Its function is as follows. Cell wall formation. Catalyzes the transfer of a GlcNAc subunit on undecaprenyl-pyrophosphoryl-MurNAc-pentapeptide (lipid intermediate I) to form undecaprenyl-pyrophosphoryl-MurNAc-(pentapeptide)GlcNAc (lipid intermediate II). This is UDP-N-acetylglucosamine--N-acetylmuramyl-(pentapeptide) pyrophosphoryl-undecaprenol N-acetylglucosamine transferase from Nocardioides sp. (strain ATCC BAA-499 / JS614).